A 279-amino-acid polypeptide reads, in one-letter code: Thymidylate synthase (279 aa).

R21 contacts dUMP. H51 is a binding site for (6R)-5,10-methylene-5,6,7,8-tetrahydrofolate. 126–127 contacts dUMP; sequence RR. Residue C159 is the Nucleophile of the active site. Residues 179–182, N190, and 220–222 contribute to the dUMP site; these read RSAD and HLY. D182 serves as a coordination point for (6R)-5,10-methylene-5,6,7,8-tetrahydrofolate. A278 lines the (6R)-5,10-methylene-5,6,7,8-tetrahydrofolate pocket.

Belongs to the thymidylate synthase family. Bacterial-type ThyA subfamily. Homodimer.

The protein localises to the cytoplasm. The catalysed reaction is dUMP + (6R)-5,10-methylene-5,6,7,8-tetrahydrofolate = 7,8-dihydrofolate + dTMP. It functions in the pathway pyrimidine metabolism; dTTP biosynthesis. Its function is as follows. Catalyzes the reductive methylation of 2'-deoxyuridine-5'-monophosphate (dUMP) to 2'-deoxythymidine-5'-monophosphate (dTMP) while utilizing 5,10-methylenetetrahydrofolate (mTHF) as the methyl donor and reductant in the reaction, yielding dihydrofolate (DHF) as a by-product. This enzymatic reaction provides an intracellular de novo source of dTMP, an essential precursor for DNA biosynthesis. The sequence is that of Thymidylate synthase from Marinobacter nauticus (strain ATCC 700491 / DSM 11845 / VT8) (Marinobacter aquaeolei).